The sequence spans 911 residues: Valine--tRNA ligase (911 aa).

The 'HIGH' region motif lies at 57–67 (PTVSGSLHVGH). The 'KMSKS' region motif lies at 599 to 603 (KMSKS). ATP is bound at residue Lys602. Residues 882-911 (EESAAEDAPETEVAVEASELGEPPAKKPKH) are disordered.

This sequence belongs to the class-I aminoacyl-tRNA synthetase family. ValS type 2 subfamily. As to quaternary structure, monomer.

It localises to the cytoplasm. It catalyses the reaction tRNA(Val) + L-valine + ATP = L-valyl-tRNA(Val) + AMP + diphosphate. Its function is as follows. Catalyzes the attachment of valine to tRNA(Val). As ValRS can inadvertently accommodate and process structurally similar amino acids such as threonine, to avoid such errors, it has a 'posttransfer' editing activity that hydrolyzes mischarged Thr-tRNA(Val) in a tRNA-dependent manner. In Bifidobacterium longum (strain DJO10A), this protein is Valine--tRNA ligase.